We begin with the raw amino-acid sequence, 503 residues long: Probable cytosol aminopeptidase (503 aa).

2 residues coordinate Mn(2+): Lys-274 and Asp-279. Lys-286 is a catalytic residue. Mn(2+) contacts are provided by Asp-297, Asp-356, and Glu-358. Arg-360 is an active-site residue.

This sequence belongs to the peptidase M17 family. Mn(2+) serves as cofactor.

It is found in the cytoplasm. The enzyme catalyses Release of an N-terminal amino acid, Xaa-|-Yaa-, in which Xaa is preferably Leu, but may be other amino acids including Pro although not Arg or Lys, and Yaa may be Pro. Amino acid amides and methyl esters are also readily hydrolyzed, but rates on arylamides are exceedingly low.. It carries out the reaction Release of an N-terminal amino acid, preferentially leucine, but not glutamic or aspartic acids.. Functionally, presumably involved in the processing and regular turnover of intracellular proteins. Catalyzes the removal of unsubstituted N-terminal amino acids from various peptides. The chain is Probable cytosol aminopeptidase from Burkholderia ambifaria (strain MC40-6).